Reading from the N-terminus, the 435-residue chain is Mitochondrial association factor 1 form a1 (435 aa).

Positions 1–20 (MWRIWRCRLSFLFATGCLLG) are cleaved as a signal peptide. The Vacuolar segment spans residues 21–96 (ALTAGLGSQM…VTARRRRNRR (76 aa)). Residues 97-117 (IALIATAVGVAVILAALYVLR) traverse the membrane as a helical segment. The Cytoplasmic portion of the chain corresponds to 118-435 (RRRAQPPQEP…ERTYTFPQGD (318 aa)). The disordered stretch occupies residues 120–159 (RAQPPQEPEPPTRLRTPRPRAPSGQQQPSESEPPAGVPMT).

In terms of assembly, interacts with host SAMM50.

It is found in the parasitophorous vacuole membrane. In terms of biological role, during host cell infection by tachyzoites, does not play a role in tethering the parasitophorous vacuole to the host mitochondria, probably because it does not bind host mitochondrial import protein TOMM70. This is Mitochondrial association factor 1 form a1 from Toxoplasma gondii (strain ATCC 50611 / Me49).